A 156-amino-acid chain; its full sequence is SsrA-binding protein (156 aa).

The protein belongs to the SmpB family.

Its subcellular location is the cytoplasm. In terms of biological role, required for rescue of stalled ribosomes mediated by trans-translation. Binds to transfer-messenger RNA (tmRNA), required for stable association of tmRNA with ribosomes. tmRNA and SmpB together mimic tRNA shape, replacing the anticodon stem-loop with SmpB. tmRNA is encoded by the ssrA gene; the 2 termini fold to resemble tRNA(Ala) and it encodes a 'tag peptide', a short internal open reading frame. During trans-translation Ala-aminoacylated tmRNA acts like a tRNA, entering the A-site of stalled ribosomes, displacing the stalled mRNA. The ribosome then switches to translate the ORF on the tmRNA; the nascent peptide is terminated with the 'tag peptide' encoded by the tmRNA and targeted for degradation. The ribosome is freed to recommence translation, which seems to be the essential function of trans-translation. This chain is SsrA-binding protein, found in Maricaulis maris (strain MCS10) (Caulobacter maris).